We begin with the raw amino-acid sequence, 585 residues long: Protein-lysine N-methyltransferase EFM1 (585 aa).

Residues 23 to 281 (PKISFRITED…AQDELFNNYG (259 aa)) enclose the SET domain. Tyr280 is a binding site for S-adenosyl-L-methionine.

Belongs to the class V-like SAM-binding methyltransferase superfamily. RKM1 family.

It is found in the cytoplasm. S-adenosyl-L-methionine-dependent protein-lysine N-methyltransferase that monomethylates elongation factor 1-alpha (TEF1/TEF2) at 'Lys-30'. The polypeptide is Protein-lysine N-methyltransferase EFM1 (Saccharomyces cerevisiae (strain ATCC 204508 / S288c) (Baker's yeast)).